Reading from the N-terminus, the 413-residue chain is Arginine biosynthesis bifunctional protein ArgJ (413 aa).

Residues Thr160, Lys186, Thr197, Glu284, Asn408, and Ser413 each contribute to the substrate site. Thr197 acts as the Nucleophile in catalysis.

Belongs to the ArgJ family. As to quaternary structure, heterotetramer of two alpha and two beta chains.

It localises to the cytoplasm. It catalyses the reaction N(2)-acetyl-L-ornithine + L-glutamate = N-acetyl-L-glutamate + L-ornithine. It carries out the reaction L-glutamate + acetyl-CoA = N-acetyl-L-glutamate + CoA + H(+). Its pathway is amino-acid biosynthesis; L-arginine biosynthesis; L-ornithine and N-acetyl-L-glutamate from L-glutamate and N(2)-acetyl-L-ornithine (cyclic): step 1/1. It functions in the pathway amino-acid biosynthesis; L-arginine biosynthesis; N(2)-acetyl-L-ornithine from L-glutamate: step 1/4. In terms of biological role, catalyzes two activities which are involved in the cyclic version of arginine biosynthesis: the synthesis of N-acetylglutamate from glutamate and acetyl-CoA as the acetyl donor, and of ornithine by transacetylation between N(2)-acetylornithine and glutamate. In Burkholderia pseudomallei (strain 1710b), this protein is Arginine biosynthesis bifunctional protein ArgJ.